Reading from the N-terminus, the 314-residue chain is Aromatic prenyltransferase (314 aa).

Belongs to the aromatic prenyltransferase family.

Prenyltransferase that attaches isoprenoid moieties to carbon atoms of aromatic substrates in an enzyme-catalyzed Friedel-Crafts reaction. The protein is Aromatic prenyltransferase of Arthroderma otae (strain ATCC MYA-4605 / CBS 113480) (Microsporum canis).